A 156-amino-acid polypeptide reads, in one-letter code: Large ribosomal subunit protein uL22 (156 aa).

Residues 114–156 (VESRPKQEKGGKAGASKASSRAARAQGSKAAAAKKTESKGGTS) are disordered. Low complexity predominate over residues 127–146 (GASKASSRAARAQGSKAAAA). Residues 147–156 (KKTESKGGTS) are compositionally biased toward basic and acidic residues.

It belongs to the universal ribosomal protein uL22 family. As to quaternary structure, part of the 50S ribosomal subunit.

In terms of biological role, this protein binds specifically to 23S rRNA; its binding is stimulated by other ribosomal proteins, e.g. L4, L17, and L20. It is important during the early stages of 50S assembly. It makes multiple contacts with different domains of the 23S rRNA in the assembled 50S subunit and ribosome. The globular domain of the protein is located near the polypeptide exit tunnel on the outside of the subunit, while an extended beta-hairpin is found that lines the wall of the exit tunnel in the center of the 70S ribosome. The chain is Large ribosomal subunit protein uL22 from Mycobacteroides abscessus (strain ATCC 19977 / DSM 44196 / CCUG 20993 / CIP 104536 / JCM 13569 / NCTC 13031 / TMC 1543 / L948) (Mycobacterium abscessus).